The following is a 1761-amino-acid chain: Probable serine/threonine-protein kinase DDB_G0282963 (1761 aa).

Disordered stretches follow at residues 18–47, 60–269, 322–458, 545–717, 749–783, 798–830, 842–956, 972–997, 1081–1151, 1179–1305, 1318–1343, and 1355–1459; these read PQQQ…QQQQ, QQQQ…SNKL, SISN…SDFN, QNSS…KSSQ, LKNS…TISQ, AFYN…STSA, TTQI…KSVF, NSHH…EVPT, ITSA…CNVN, KNNC…PSKQ, ALDS…GTPT, and QHSR…ECWK. Low complexity-rich tracts occupy residues 19–47, 60–85, 92–105, and 112–237; these read QQQQ…QQQQ, QQQQ…SNEI, NITN…IISL, and ALNS…NNNN. Residues 238–256 are compositionally biased toward polar residues; that stretch reads KQMTPPTFKNNLQVKHQPQ. Composition is skewed to low complexity over residues 257–269, 322–341, 348–451, and 546–572; these read SSSG…SNKL, SISN…TNTT, GSIG…NNGV, and NSSL…NNNI. Over residues 573–582 the composition is skewed to polar residues; it reads MAGSTSSVIY. Residues 591–627 are compositionally biased toward low complexity; sequence NENNNNNINNDNTVCNINNNNNSNNNKSNNSNNSNNS. Acidic residues predominate over residues 633 to 643; that stretch reads SSDEEPETDSD. Low complexity-rich tracts occupy residues 674-697, 759-778, 805-824, 847-885, 902-956, 979-990, 1081-1149, and 1180-1262; these read NNTN…NNNT, PILS…NNSN, NNNN…NNNN, TSDI…YNNY, TKMS…KSVF, SGNNSSNSNNNN, ITSA…CTCN, and NNCT…SNNN. The segment covering 1263–1273 has biased composition (basic residues); sequence NHHHHHHHHHN. Composition is skewed to low complexity over residues 1288 to 1303, 1320 to 1338, 1359 to 1386, and 1393 to 1454; these read SSSS…SSPS, DSTN…TSSN, NNSS…NNNN, and SNST…MNSN. A Protein kinase domain is found at 1476–1744; it reads LFLIKKIGAG…AITSLYDDYI (269 aa). ATP contacts are provided by residues 1482–1490 and Lys1503; that span reads IGAGSFSKV. Asp1597 functions as the Proton acceptor in the catalytic mechanism.

It belongs to the protein kinase superfamily. TKL Ser/Thr protein kinase family.

It carries out the reaction L-seryl-[protein] + ATP = O-phospho-L-seryl-[protein] + ADP + H(+). The enzyme catalyses L-threonyl-[protein] + ATP = O-phospho-L-threonyl-[protein] + ADP + H(+). The protein is Probable serine/threonine-protein kinase DDB_G0282963 of Dictyostelium discoideum (Social amoeba).